Reading from the N-terminus, the 380-residue chain is Ribosomal RNA large subunit methyltransferase F (380 aa).

Positions 1-32 are disordered; it reads MSHKTKPSTQERKAGKPSAPKRKVISKSPNSK.

The protein belongs to the methyltransferase superfamily. METTL16/RlmF family.

Its subcellular location is the cytoplasm. It carries out the reaction adenosine(1618) in 23S rRNA + S-adenosyl-L-methionine = N(6)-methyladenosine(1618) in 23S rRNA + S-adenosyl-L-homocysteine + H(+). In terms of biological role, specifically methylates the adenine in position 1618 of 23S rRNA. The sequence is that of Ribosomal RNA large subunit methyltransferase F from Shewanella halifaxensis (strain HAW-EB4).